Reading from the N-terminus, the 470-residue chain is Regulator of microtubule dynamics protein 3 (470 aa).

The Mitochondrial intermembrane segment spans residues 1 to 12; the sequence is MSRLGALGGSRA. A helical transmembrane segment spans residues 13 to 35; it reads GLGLLLGTAAGLGFLCVLYSQRW. Topologically, residues 36 to 470 are cytoplasmic; the sequence is KRTQRHGRSH…DLEELEVILG (435 aa). Phosphoserine occurs at positions 44, 46, 50, and 57. Residues 91–125 are a coiled coil; it reads LDRLDFVLTSLMALRREVEELQRSLQGLAGEIVGE. Positions 157 to 163 match the FFAT motif; that stretch reads VYFTASS. The residue at position 160 (threonine 160) is a Phosphothreonine. A disordered region spans residues 168–205; sequence TDAESEGGYTTANAESDYERDSDKESGDAEDEVSCETV. Residues serine 183, serine 193, serine 212, and serine 233 each carry the phosphoserine modification. A compositionally biased stretch (basic and acidic residues) spans 184-194; that stretch reads DYERDSDKESG.

It belongs to the RMDN family. As to quaternary structure, interacts with PTPN2. Interacts with microtubules. Interacts with VAPB. Interacts (via FFAT motif) with MOSPD2 (via MSP domain). Interacts (via phosphorylated FFAT motif) with MOSPD2, VAPA and VAPB. In terms of processing, phosphorylation at Thr-160 of the FFAT motif activates interaction with MOSPD2, VAPA and VAPB.

The protein resides in the mitochondrion outer membrane. It localises to the cytoplasm. Its subcellular location is the nucleus. The protein localises to the cytoskeleton. It is found in the spindle. The protein resides in the spindle pole. Its function is as follows. Involved in cellular calcium homeostasis regulation. May participate in differentiation and apoptosis of keratinocytes. Overexpression induces apoptosis. This chain is Regulator of microtubule dynamics protein 3, found in Mus musculus (Mouse).